The following is a 174-amino-acid chain: Flavodoxin (174 aa).

The Flavodoxin-like domain occupies 4 to 165 (VGLFYGSDTG…RVEKWCKQIY (162 aa)).

It belongs to the flavodoxin family. FMN serves as cofactor.

In terms of biological role, low-potential electron donor to a number of redox enzymes. This Haemophilus influenzae (strain ATCC 51907 / DSM 11121 / KW20 / Rd) protein is Flavodoxin (fldA).